The primary structure comprises 209 residues: Glutathione S-transferase F7 (209 aa).

One can recognise a GST N-terminal domain in the interval 2-83 (AGIKVFGHPA…YIAHFYSDKG (82 aa)). Glutathione is bound by residues 12 to 13 (ST), 41 to 42 (HK), 54 to 55 (KV), and 67 to 68 (ES). A GST C-terminal domain is found at 90–209 (GSKDIAGIAM…TSRPSAKKVL (120 aa)).

The protein belongs to the GST superfamily. Phi family.

The protein localises to the cytoplasm. It is found in the cytosol. It carries out the reaction RX + glutathione = an S-substituted glutathione + a halide anion + H(+). Its function is as follows. May be involved in the conjugation of reduced glutathione to a wide number of exogenous and endogenous hydrophobic electrophiles and have a detoxification role against certain herbicides. This chain is Glutathione S-transferase F7, found in Arabidopsis thaliana (Mouse-ear cress).